The chain runs to 459 residues: Exodeoxyribonuclease 7 large subunit (459 aa).

This sequence belongs to the XseA family. In terms of assembly, heterooligomer composed of large and small subunits.

Its subcellular location is the cytoplasm. It catalyses the reaction Exonucleolytic cleavage in either 5'- to 3'- or 3'- to 5'-direction to yield nucleoside 5'-phosphates.. Functionally, bidirectionally degrades single-stranded DNA into large acid-insoluble oligonucleotides, which are then degraded further into small acid-soluble oligonucleotides. The sequence is that of Exodeoxyribonuclease 7 large subunit from Pseudomonas syringae pv. tomato (strain ATCC BAA-871 / DC3000).